An 844-amino-acid chain; its full sequence is DNA mismatch repair protein MutS (844 aa).

602–609 (GPNMSGKS) provides a ligand contact to ATP.

Belongs to the DNA mismatch repair MutS family.

Its function is as follows. This protein is involved in the repair of mismatches in DNA. It is possible that it carries out the mismatch recognition step. This protein has a weak ATPase activity. In Streptococcus pneumoniae (strain Hungary19A-6), this protein is DNA mismatch repair protein MutS.